The primary structure comprises 208 residues: Predicted GPI-anchored protein 37 (208 aa).

A signal peptide spans 1–18; that stretch reads MLFTQLIILLTVTSQALS. Residues 33–93 form a disordered region; that stretch reads TKRLGGGSRG…SSSSSGSRNW (61 aa). The segment covering 36 to 53 has biased composition (gly residues); sequence LGGGSRGGSSSGSRGGSS. Over residues 54–63 the composition is skewed to low complexity; it reads SGSSSGSSSG. Asparagine 173 carries an N-linked (GlcNAc...) asparagine glycan. A lipid anchor (GPI-anchor amidated serine) is attached at serine 185. A propeptide spans 186-208 (removed in mature form); that stretch reads SSLNIPSTHFYLIGFAAAYSIVL.

Belongs to the PGA37 family.

The protein localises to the cell membrane. Its function is as follows. Predicted GPI-anchored protein which may have a role during host infection. The sequence is that of Predicted GPI-anchored protein 37 (PGA37) from Candida albicans (strain SC5314 / ATCC MYA-2876) (Yeast).